A 388-amino-acid chain; its full sequence is Sulfate adenylyltransferase (388 aa).

Belongs to the sulfate adenylyltransferase family.

It catalyses the reaction sulfate + ATP + H(+) = adenosine 5'-phosphosulfate + diphosphate. It functions in the pathway sulfur metabolism; hydrogen sulfide biosynthesis; sulfite from sulfate: step 1/3. This is Sulfate adenylyltransferase from Acaryochloris marina (strain MBIC 11017).